Reading from the N-terminus, the 87-residue chain is Small ribosomal subunit protein bS20 (87 aa).

The disordered stretch occupies residues 1–22 (MANSPQAKKRARQNEKRFAINK).

This sequence belongs to the bacterial ribosomal protein bS20 family.

Binds directly to 16S ribosomal RNA. This Ruegeria sp. (strain TM1040) (Silicibacter sp.) protein is Small ribosomal subunit protein bS20.